The primary structure comprises 233 residues: MDNKRQEQLQHFWEQFHLPAIDLEGLDLALTHPTYAFEHHLPGDNQRLEFLGDAVLGLVVATYLYQHFPQLPEGDLTRMRAAVVCEASLVKVARRLRVGDLLRLGQGEEHSGGRERPSNLADAMEAIIGSVYLSGGYELARDFVLQIFTPALEILSDTSFIDSKSALQEFVQSQGTENVVYKILEEWGPDHAKGYKAGVFLKNRLLATGLGHSKKEAEREAARAALALLKVQG.

The RNase III domain occupies 9–136 (LQHFWEQFHL…IIGSVYLSGG (128 aa)). Position 49 (E49) interacts with Mg(2+). D53 is an active-site residue. Residues D122 and E125 each coordinate Mg(2+). The active site involves E125. The region spanning 162 to 231 (DSKSALQEFV…ARAALALLKV (70 aa)) is the DRBM domain.

This sequence belongs to the ribonuclease III family. In terms of assembly, homodimer. It depends on Mg(2+) as a cofactor.

The protein localises to the cytoplasm. It carries out the reaction Endonucleolytic cleavage to 5'-phosphomonoester.. Its function is as follows. Digests double-stranded RNA. Involved in the processing of primary rRNA transcript to yield the immediate precursors to the large and small rRNAs (23S and 16S). Processes some mRNAs, and tRNAs when they are encoded in the rRNA operon. Processes pre-crRNA and tracrRNA of type II CRISPR loci if present in the organism. The chain is Ribonuclease 3 from Moorella thermoacetica (strain ATCC 39073 / JCM 9320).